A 327-amino-acid chain; its full sequence is MSEKSSRKERDEKTEKETARQGKHRRIRVKSRHYEMPFSRGVLARSLTAIGVEPHKAYEIALKIKEELQDEGIEEISTDELADIIRTKLEEIDETLAERYELWRRIKKREEPIIVLIGGASGVGTSTIASEVGHRLGITNVIGTDAIREVMRRVLAEELYPTLYESSYTAWKRLRYEPAEDPVITGFLDHSEPVVVGIEGVVNRSINEGIHVIVEGVHIVPRLIKKEILNYPNVFVFMLAVEDEEAHKWRFYARSRDTKLSRPAERYLKYFEEIRRIHDFLVEDAEEHDIPVINNEHIDETVDQIVSYISSKLLKGERELSKSVSWW.

Basic and acidic residues predominate over residues methionine 1 to arginine 20. Residues methionine 1–isoleucine 27 are disordered. One can recognise an ATP-cone domain in the interval arginine 25 to glutamate 111.

Belongs to the 2-phosphoglycerate kinase family. It depends on a divalent metal cation as a cofactor.

It catalyses the reaction (2R)-2-phosphoglycerate + ATP = (2R)-2,3-bisphosphoglycerate + ADP + H(+). Its pathway is thermoadapter biosynthesis; cyclic 2,3-diphosphoglycerate biosynthesis; cyclic 2,3-diphosphoglycerate from 2-phospho-D-glycerate: step 1/2. In terms of biological role, catalyzes the phosphorylation of 2-phosphoglycerate to 2,3-diphosphoglycerate. Involved in the biosynthesis of cyclic 2,3-bisphosphoglycerate, a thermoprotectant. The chain is 2-phosphoglycerate kinase from Methanopyrus kandleri (strain AV19 / DSM 6324 / JCM 9639 / NBRC 100938).